A 520-amino-acid chain; its full sequence is MTEKRERPGPLRWLRHLLDQLLVRILSLSLFRSRCDPPPLQRFPATELPPAVAAKYVPIPRVKGLPVVGTLVDLIAAGGATHLHKYIDARHKQYGPIFRERLGGTQDAVFVSSANLMRGVFQHEGQYPQHPLPDAWTLYNQQHACQRGLFFMEGAEWLHNRRILNRLLLNGNLNWMDVHIESCTRRMVDQWKRRTAEAAAIPLAESGEIRSYELPLLEQQLYRWSIEVLCCIMFGTSVLTCPKIQSSLDYFTQIVHKVFEHSSRLMTFPPRLAQILRLPIWRDFEANVDEVLREGAAIIDHCIRVQEDQRRPHDEALYHRLQAADVPGDMIKRIFVDLVIAAGDTTAFSSQWALFALSKEPRLQQRLAKERATNDSRLMHGLIKESLRLYPVAPFIGRYLPQDAQLGGHFIEKDTMVLLSLYTAGRDPSHFEQPERVLPERWCIGETEQVHKSHGSLPFAIGQRSCIGRRVALKQLHSLLGRCAAQFEMSCLNEMPVDSVLRMVTVPDRTLRLALRPRTE.

Residue C466 coordinates heme.

The protein belongs to the cytochrome P450 family. Heme serves as cofactor. As to expression, complex coexpression pattern of dib (disembodied) and sad (shade) in the early embryo that restricts to the prothoracic gland cells of the developing ring gland during late embryogenesis. In larvae and adult, coexpression is seen in prothoracic gland and follicle cells of the ovary. In adults, coexpression is seen in the follicle cells, sad only is expressed in nurse cells.

Its subcellular location is the mitochondrion membrane. It catalyses the reaction 2-deoxyecdysone + 2 reduced [adrenodoxin] + O2 + 2 H(+) = ecdysone + 2 oxidized [adrenodoxin] + H2O. The enzyme catalyses 2,22-dideoxyecdysone + 2 reduced [adrenodoxin] + O2 + 2 H(+) = 22-deoxyecdysone + 2 oxidized [adrenodoxin] + H2O. It functions in the pathway steroid biosynthesis; ecdysteroid biosynthesis. Its function is as follows. Required for CNS development: midline glial cells. Involved in the metabolism of insect hormones: responsible for ecdysteroid C2-hydroxylase activity. May be involved in the breakdown of synthetic insecticides. This is Cytochrome P450 315a1, mitochondrial from Drosophila melanogaster (Fruit fly).